We begin with the raw amino-acid sequence, 582 residues long: 2-succinyl-5-enolpyruvyl-6-hydroxy-3-cyclohexene-1-carboxylate synthase (582 aa).

The protein belongs to the TPP enzyme family. MenD subfamily. Homodimer. Mg(2+) serves as cofactor. The cofactor is Mn(2+). Requires thiamine diphosphate as cofactor.

It catalyses the reaction isochorismate + 2-oxoglutarate + H(+) = 5-enolpyruvoyl-6-hydroxy-2-succinyl-cyclohex-3-ene-1-carboxylate + CO2. Its pathway is quinol/quinone metabolism; 1,4-dihydroxy-2-naphthoate biosynthesis; 1,4-dihydroxy-2-naphthoate from chorismate: step 2/7. It functions in the pathway quinol/quinone metabolism; menaquinone biosynthesis. Functionally, catalyzes the thiamine diphosphate-dependent decarboxylation of 2-oxoglutarate and the subsequent addition of the resulting succinic semialdehyde-thiamine pyrophosphate anion to isochorismate to yield 2-succinyl-5-enolpyruvyl-6-hydroxy-3-cyclohexene-1-carboxylate (SEPHCHC). The protein is 2-succinyl-5-enolpyruvyl-6-hydroxy-3-cyclohexene-1-carboxylate synthase of Chlorobaculum tepidum (strain ATCC 49652 / DSM 12025 / NBRC 103806 / TLS) (Chlorobium tepidum).